The chain runs to 160 residues: SsrA-binding protein (160 aa).

Belongs to the SmpB family.

The protein resides in the cytoplasm. Functionally, required for rescue of stalled ribosomes mediated by trans-translation. Binds to transfer-messenger RNA (tmRNA), required for stable association of tmRNA with ribosomes. tmRNA and SmpB together mimic tRNA shape, replacing the anticodon stem-loop with SmpB. tmRNA is encoded by the ssrA gene; the 2 termini fold to resemble tRNA(Ala) and it encodes a 'tag peptide', a short internal open reading frame. During trans-translation Ala-aminoacylated tmRNA acts like a tRNA, entering the A-site of stalled ribosomes, displacing the stalled mRNA. The ribosome then switches to translate the ORF on the tmRNA; the nascent peptide is terminated with the 'tag peptide' encoded by the tmRNA and targeted for degradation. The ribosome is freed to recommence translation, which seems to be the essential function of trans-translation. The protein is SsrA-binding protein of Escherichia coli O6:K15:H31 (strain 536 / UPEC).